A 236-amino-acid chain; its full sequence is Urease accessory protein UreG (236 aa).

The segment at 1–26 is disordered; sequence MHDHSLHSGHDHGLGPGSFHDRGAPH. 42–49 contacts GTP; it reads GPVGSGKT.

Belongs to the SIMIBI class G3E GTPase family. UreG subfamily. In terms of assembly, homodimer. UreD, UreF and UreG form a complex that acts as a GTP-hydrolysis-dependent molecular chaperone, activating the urease apoprotein by helping to assemble the nickel containing metallocenter of UreC. The UreE protein probably delivers the nickel.

It is found in the cytoplasm. Its function is as follows. Facilitates the functional incorporation of the urease nickel metallocenter. This process requires GTP hydrolysis, probably effectuated by UreG. This chain is Urease accessory protein UreG, found in Anaeromyxobacter sp. (strain Fw109-5).